We begin with the raw amino-acid sequence, 765 residues long: Lysyl oxidase homolog 2 (765 aa).

The signal sequence occupies residues 1–19; that stretch reads MLVSHVFLLTLSLSVPSLG. 4 SRCR domains span residues 49–150, 179–293, 317–416, and 426–535; these read VRLA…VQCS, IRPI…VSCT, VRLR…VRCN, and VRLS…VSCV. 9 cysteine pairs are disulfide-bonded: Cys-75–Cys-139, Cys-88–Cys-149, Cys-119–Cys-129, Cys-209–Cys-282, Cys-222–Cys-292, Cys-256–Cys-266, Cys-342–Cys-405, Cys-355–Cys-415, and Cys-386–Cys-396. Asn-279 carries an N-linked (GlcNAc...) asparagine glycan. N-linked (GlcNAc...) asparagine glycosylation is present at Asn-446. 3 disulfide bridges follow: Cys-455-Cys-521, Cys-468-Cys-534, and Cys-502-Cys-512. The tract at residues 539–742 is lysyl-oxidase like; it reads PDLVLNAALV…WMYNCHIGGS (204 aa). Ca(2+) contacts are provided by Asp-540 and Leu-541. 4 disulfides stabilise this stretch: Cys-564–Cys-616, Cys-570–Cys-686, Cys-648–Cys-664, and Cys-654–Cys-676. 3 residues coordinate Cu cation: His-617, His-619, and His-621. A glycan (N-linked (GlcNAc...) asparagine) is linked at Asn-635. A cross-link (lysine tyrosylquinone (Lys-Tyr)) is located at residues 644-680; sequence KASFCLEDSECEADIQKQYVCANFGEQGITVGCWDLY. The residue at position 680 (Tyr-680) is a 2',4',5'-topaquinone. Ca(2+) is bound by residues Glu-713, Asp-715, Asn-718, and Asn-719. An intrachain disulfide couples Cys-723 to Cys-737.

This sequence belongs to the lysyl oxidase family. Cu cation is required as a cofactor. The cofactor is lysine tyrosylquinone residue. In terms of processing, the lysine tyrosylquinone cross-link (LTQ) is generated by condensation of the epsilon-amino group of a lysine with a topaquinone produced by oxidation of tyrosine.

It localises to the secreted. The protein localises to the extracellular space. The protein resides in the extracellular matrix. Its subcellular location is the basement membrane. It is found in the nucleus. It localises to the chromosome. The protein localises to the endoplasmic reticulum. The enzyme catalyses L-lysyl-[protein] + O2 + H2O = (S)-2-amino-6-oxohexanoyl-[protein] + H2O2 + NH4(+). Its function is as follows. Mediates the post-translational oxidative deamination of lysine residues on target proteins leading to the formation of deaminated lysine (allysine). Acts as a transcription corepressor and specifically mediates deamination of trimethylated 'Lys-4' of histone H3 (H3K4me3), a specific tag for epigenetic transcriptional activation. Shows no activity against histone H3 when it is trimethylated on 'Lys-9' (H3K9me3) or 'Lys-27' (H3K27me3) or when 'Lys-4' is monomethylated (H3K4me1) or dimethylated (H3K4me2). Also mediates deamination of methylated TAF10, a member of the transcription factor IID (TFIID) complex, which induces release of TAF10 from promoters, leading to inhibition of TFIID-dependent transcription. LOXL2-mediated deamination of TAF10 results in transcriptional repression of genes required for embryonic stem cell pluripotency. Involved in epithelial to mesenchymal transition (EMT) and participates in repression of E-cadherin, probably by mediating deamination of histone H3. When secreted into the extracellular matrix, promotes cross-linking of extracellular matrix proteins by mediating oxidative deamination of peptidyl lysine residues in precursors to fibrous collagen and elastin. Acts as a regulator of sprouting angiogenesis, probably via collagen IV scaffolding. Acts as a regulator of chondrocyte differentiation, probably by regulating expression of factors that control chondrocyte differentiation. The chain is Lysyl oxidase homolog 2 (loxl2) from Xenopus laevis (African clawed frog).